Consider the following 156-residue polypeptide: Ecotin (156 aa).

The N-terminal stretch at 1–19 (MKALLIAAGVAALSSTAMA) is a signal peptide. Residues C65 and C102 are joined by a disulfide bond.

It belongs to the protease inhibitor I11 (ecotin) family. In terms of assembly, homodimer.

The protein resides in the periplasm. In terms of biological role, general inhibitor of family S1 serine proteases. This chain is Ecotin, found in Pseudomonas aeruginosa (strain UCBPP-PA14).